The sequence spans 841 residues: Follistatin-related protein 4 (841 aa).

The N-terminal stretch at 1-22 is a signal peptide; it reads MKPGGFWPHLALLGVSLPAVLG. Residues 29-54 form a disordered region; that stretch reads SRSPNMVPGESQAEETRGFEVTRREG. The span at 42-54 shows a compositional bias: basic and acidic residues; the sequence is EETRGFEVTRREG. The 55-residue stretch at 80 to 134 folds into the Kazal-like domain; it reads TTGQPSCQCLEVCRPRYMPVCGSDGRLYGNHCELRRAACLLGKRIVSVHSKDCFL. Cystine bridges form between Cys-86/Cys-118, Cys-92/Cys-111, and Cys-100/Cys-132. EF-hand domains are found at residues 173–208 and 225–247; these read QKRL…EQDM and DYNS…IQLS. The Ca(2+) site is built by Asp-186, Asp-188, Asn-190, His-192, Glu-197, Asp-225, Asn-227, Asp-229, Ser-231, and Glu-236. Ig-like domains follow at residues 250-336 and 340-425; these read PEDK…VLQV and PVIR…EDIS. Cystine bridges form between Cys-269/Cys-320 and Cys-361/Cys-412. N-linked (GlcNAc...) asparagine glycosylation occurs at Asn-317.

It is found in the secreted. In Mus musculus (Mouse), this protein is Follistatin-related protein 4 (Fstl4).